We begin with the raw amino-acid sequence, 59 residues long: Protein NapE (59 aa).

Residues 1 to 18 (MIDSAKETDRPKHRKRDE) are Cytoplasmic-facing. The helical transmembrane segment at 19–43 (VIAFLILAVVIWPILSVAIVGGYGF) threads the bilayer. Over 44-59 (LVWMSQIIFGPPGPMH) the chain is Periplasmic.

It localises to the cell inner membrane. Its function is as follows. May be involved in mediating interactions between NapC and a quinol oxidase. The sequence is that of Protein NapE (napE) from Paracoccus pantotrophus (Thiosphaera pantotropha).